The primary structure comprises 88 residues: Co-chaperonin GroES (88 aa).

Belongs to the GroES chaperonin family. In terms of assembly, heptamer of 7 subunits arranged in a ring. Interacts with the chaperonin GroEL.

It is found in the cytoplasm. Its function is as follows. Together with the chaperonin GroEL, plays an essential role in assisting protein folding. The GroEL-GroES system forms a nano-cage that allows encapsulation of the non-native substrate proteins and provides a physical environment optimized to promote and accelerate protein folding. GroES binds to the apical surface of the GroEL ring, thereby capping the opening of the GroEL channel. The chain is Co-chaperonin GroES from Thermodesulfovibrio yellowstonii (strain ATCC 51303 / DSM 11347 / YP87).